Here is a 164-residue protein sequence, read N- to C-terminus: 2-C-methyl-D-erythritol 2,4-cyclodiphosphate synthase (164 aa).

Residues D9 and H11 each contribute to the a divalent metal cation site. Residues 9–11 (DAH) and 36–37 (HS) contribute to the 4-CDP-2-C-methyl-D-erythritol 2-phosphate site. A divalent metal cation is bound at residue H44. Residues 58-60 (DLG), 63-67 (FPDSD), 134-137 (TTTE), F141, and R144 each bind 4-CDP-2-C-methyl-D-erythritol 2-phosphate.

This sequence belongs to the IspF family. As to quaternary structure, homotrimer. A divalent metal cation is required as a cofactor.

The enzyme catalyses 4-CDP-2-C-methyl-D-erythritol 2-phosphate = 2-C-methyl-D-erythritol 2,4-cyclic diphosphate + CMP. Its pathway is isoprenoid biosynthesis; isopentenyl diphosphate biosynthesis via DXP pathway; isopentenyl diphosphate from 1-deoxy-D-xylulose 5-phosphate: step 4/6. Its function is as follows. Involved in the biosynthesis of isopentenyl diphosphate (IPP) and dimethylallyl diphosphate (DMAPP), two major building blocks of isoprenoid compounds. Catalyzes the conversion of 4-diphosphocytidyl-2-C-methyl-D-erythritol 2-phosphate (CDP-ME2P) to 2-C-methyl-D-erythritol 2,4-cyclodiphosphate (ME-CPP) with a corresponding release of cytidine 5-monophosphate (CMP). In Alkalilimnicola ehrlichii (strain ATCC BAA-1101 / DSM 17681 / MLHE-1), this protein is 2-C-methyl-D-erythritol 2,4-cyclodiphosphate synthase.